The sequence spans 143 residues: Large ribosomal subunit protein uL11 (143 aa).

It belongs to the universal ribosomal protein uL11 family. Part of the ribosomal stalk of the 50S ribosomal subunit. Interacts with L10 and the large rRNA to form the base of the stalk. L10 forms an elongated spine to which L12 dimers bind in a sequential fashion forming a multimeric L10(L12)X complex. Post-translationally, one or more lysine residues are methylated.

Functionally, forms part of the ribosomal stalk which helps the ribosome interact with GTP-bound translation factors. The polypeptide is Large ribosomal subunit protein uL11 (Novosphingobium aromaticivorans (strain ATCC 700278 / DSM 12444 / CCUG 56034 / CIP 105152 / NBRC 16084 / F199)).